A 957-amino-acid polypeptide reads, in one-letter code: Atromentin synthetase (957 aa).

Residues 59–464 are adenylation (A) domain; the sequence is SVQARTFQDF…SGRIKDTVIV (406 aa). Residues 596–674 form the Carrier domain; the sequence is TPSTDDEKAL…DLAKYVNGLV (79 aa). The thiolation and peptide carrier (T) domain stretch occupies residues 601–671; the sequence is DEKALAAIYA…IVSDLAKYVN (71 aa). Position 633 is an O-(pantetheine 4'-phosphoryl)serine (Ser633). Positions 697–947 are thioesterase (TE) domain; that stretch reads PIFFVHPGVG…FDHVPQFQKI (251 aa).

It belongs to the ATP-dependent AMP-binding enzyme family.

It functions in the pathway secondary metabolite biosynthesis. The L-tyrosine:2-oxoglutarate aminotransferase atrD and the atromentin synthetase atrA catalyze consecutive steps to turn over L-tyrosine into atromentin, which represents the generic precursor molecule for the entire terphenylquinone and pulvinic acid family of pigments, which are widely distributed secondary metabolites in homobasidiomycetes. The first step is catalyzed by atrD which converts L-tyrosine in to 4-hydroxyphenylpyruvate (4-HPP). Adenylation of two 4-HPP monomers by the atrA adenylation (A) domain, ester bond formation between monomers and atrA, and symmetric C-C-bond formation between two monomers by atrA leads to atromentin. The sequence is that of Atromentin synthetase from Tapinella panuoides (Oyster rollrim mushroom).